Reading from the N-terminus, the 438-residue chain is tRNA-dihydrouridine(16/17) synthase [NAD(P)(+)]-like (438 aa).

FMN is bound by residues 23 to 25 (PMV) and glutamine 79. The Proton donor role is filled by cysteine 108. FMN contacts are provided by residues lysine 147, histidine 175, 208–210 (NGN), and 232–233 (AE). Residues 343–387 (GPKEGSKENSSGRSKRALEEEEGSMEGLSKNKLKKQLRNPHKTFD) form a disordered region. A compositionally biased stretch (basic residues) spans 373-383 (NKLKKQLRNPH).

It belongs to the Dus family. Dus1 subfamily. FMN is required as a cofactor.

The protein resides in the cytoplasm. It is found in the nucleus. The catalysed reaction is 5,6-dihydrouridine(16) in tRNA + NADP(+) = uridine(16) in tRNA + NADPH + H(+). The enzyme catalyses 5,6-dihydrouridine(16) in tRNA + NAD(+) = uridine(16) in tRNA + NADH + H(+). It carries out the reaction 5,6-dihydrouridine(17) in tRNA + NAD(+) = uridine(17) in tRNA + NADH + H(+). It catalyses the reaction 5,6-dihydrouridine(17) in tRNA + NADP(+) = uridine(17) in tRNA + NADPH + H(+). In terms of biological role, catalyzes the synthesis of dihydrouridine, a modified base found in the D-loop of most tRNAs. Specifically modifies U16 and U17 in cytoplasmic tRNAs. Affects the level of some mature tRNA and thereby the total cellular translation. This is tRNA-dihydrouridine(16/17) synthase [NAD(P)(+)]-like (Dus1l) from Rattus norvegicus (Rat).